The sequence spans 372 residues: O-glycoside alpha-1,2-mannosyltransferase homolog 2 (372 aa).

The Cytoplasmic segment spans residues 1–6 (MRISRL). A helical; Signal-anchor for type II membrane protein membrane pass occupies residues 7–27 (LIRVLLGFVILFITYILFPSI). Residues 28-372 (PKALVNTLNV…NLTNEDYDEL (345 aa)) are Lumenal-facing. Glu-271 functions as the Nucleophile in the catalytic mechanism.

The protein belongs to the glycosyltransferase 15 family.

The protein localises to the endoplasmic reticulum membrane. Probable mannosyltransferase involved in O-glycosylation of cell wall and secreted proteins. The protein is O-glycoside alpha-1,2-mannosyltransferase homolog 2 (omh2) of Schizosaccharomyces pombe (strain 972 / ATCC 24843) (Fission yeast).